A 424-amino-acid chain; its full sequence is Bone morphogenetic protein 10 (424 aa).

The N-terminal stretch at 1–21 (MGSLVLTLCALFCLAAYLVSG) is a signal peptide. Residues 22–316 (SPIMNLEQSP…IYDSTARIRR (295 aa)) constitute a propeptide that is removed on maturation. 2 N-linked (GlcNAc...) asparagine glycosylation sites follow: Asn-67 and Asn-131. 3 cysteine pairs are disulfide-bonded: Cys-323/Cys-389, Cys-352/Cys-421, and Cys-356/Cys-423.

It belongs to the TGF-beta family. In terms of assembly, homodimer; disulfide-linked. Interacts with FBN1 (via N-terminal domain) and FBN2. Interacts with ENG. Detected in mammary epithelia (at protein level).

Its subcellular location is the secreted. Its function is as follows. Required for maintaining the proliferative activity of embryonic cardiomyocytes by preventing premature activation of the negative cell cycle regulator CDKN1C/p57KIP and maintaining the required expression levels of cardiogenic factors such as MEF2C and NKX2-5. Acts as a ligand for ACVRL1/ALK1, BMPR1A/ALK3 and BMPR1B/ALK6, leading to activation of SMAD1, SMAD5 and SMAD8 transcription factors. Inhibits endothelial cell migration and growth. May reduce cell migration and cell matrix adhesion in breast cancer cell lines. This is Bone morphogenetic protein 10 (BMP10) from Homo sapiens (Human).